The primary structure comprises 469 residues: COP9 signalosome complex subunit 5 (469 aa).

An MPN domain is found at 63-200 (TYISSLALCK…IGAFRTFPDN (138 aa)). Residues histidine 146, histidine 148, and aspartate 159 each coordinate Zn(2+). Residues 146 to 159 (HSHPGYGCWLSGID) carry the JAMM motif motif. 2 disordered regions span residues 201 to 220 (YKSP…PPSK) and 331 to 404 (YDSF…KRPM). Over residues 344-353 (DEMDDESDLD) the composition is skewed to acidic residues.

The protein belongs to the peptidase M67A family. CSN5 subfamily. In terms of assembly, component of the COP9 signalosome (CSN) complex.

Its subcellular location is the cytoplasm. It is found in the nucleus. In terms of biological role, catalytic Component of the COP9 signalosome (CSN) complex that acts as an regulator of the ubiquitin (Ubl) conjugation pathway by mediating the deneddylation of the cullin subunit of SCF-type E3 ubiquitin-protein ligase complexes. The CSN complex is involved in the regulation of the mating pheromone response. The chain is COP9 signalosome complex subunit 5 (RRI1) from Debaryomyces hansenii (strain ATCC 36239 / CBS 767 / BCRC 21394 / JCM 1990 / NBRC 0083 / IGC 2968) (Yeast).